Consider the following 218-residue polypeptide: Mitochondrial import inner membrane translocase subunit TIM17-1 (218 aa).

Transmembrane regions (helical) follow at residues V19–I36, F66–Y82, P89–L105, and A116–L133.

The protein belongs to the Tim17/Tim22/Tim23 family. As to quaternary structure, component of the TIM17:23 complex at least composed of TIM23, TIM17 and TIM50. The complex interacts with the TIM44 component of the PAM complex. As to expression, expressed in flowers, leaves and cotyledons, and at very low levels in roots.

The protein localises to the mitochondrion inner membrane. In terms of biological role, essential component of the TIM17:23 complex, a complex that mediates the translocation of transit peptide-containing proteins across the mitochondrial inner membrane. Links the inner and outer membranes. The sequence is that of Mitochondrial import inner membrane translocase subunit TIM17-1 (TIM17-1) from Arabidopsis thaliana (Mouse-ear cress).